The chain runs to 423 residues: Probable M18 family aminopeptidase 2 (423 aa).

Zn(2+) contacts are provided by histidine 84, histidine 157, and histidine 397.

The protein belongs to the peptidase M18 family. Zn(2+) is required as a cofactor.

The sequence is that of Probable M18 family aminopeptidase 2 (apeB) from Borreliella burgdorferi (strain ATCC 35210 / DSM 4680 / CIP 102532 / B31) (Borrelia burgdorferi).